The following is a 431-amino-acid chain: MRKPFYKILYVQVLFAIFVGILLGHFWPDTGVAMKPLGDGFIKLIKMIIGPIIFCTVVTGIAGMSDMKKVGRVGGKALLYFEIVSTFALLIGLGAAHLLKPGVGFNIDPATLDTKAIEQYVSKAHGQSTVEFLMHIIPDTIFSAFSNGDILQILLVSLFFGAALAAIGERARIVVQLIEQVSKVFFHIVHVITKVAPIGAFGAMAFTIGKYGLGSLVPLLKLIGTFYFTAIVFVVFVLGAIARATGFNILRFISYIKEELLIVLGTSSSEAALPHLMEKLEKLGCSKSVVGLVVPTGYSFNLDGTNIYMTMAVIFIAQATGIELTLLQQLTILGVAMLTSKGASGVTGAGFITLAATLAVVPTIPVAGMVLILGIDRFMSECRALTNIIGNGVATVVVSAWEHELDRAQLKRTLQQGGEDEAELADAGQNV.

Transmembrane regions (helical) follow at residues 8 to 28 (ILYV…HFWP), 44 to 64 (LIKM…IAGM), 78 to 98 (LLYF…AAHL), 148 to 168 (GDIL…AAIG), 188 to 208 (IVHV…AFTI), 222 to 242 (LIGT…GAIA), 307 to 327 (IYMT…LTLL), and 355 to 375 (AATL…ILGI).

Belongs to the dicarboxylate/amino acid:cation symporter (DAACS) (TC 2.A.23) family.

It localises to the cell inner membrane. Functionally, responsible for the transport of dicarboxylates such as succinate, fumarate, and malate from the periplasm across the membrane. The protein is C4-dicarboxylate transport protein of Cupriavidus pinatubonensis (strain JMP 134 / LMG 1197) (Cupriavidus necator (strain JMP 134)).